Consider the following 371-residue polypeptide: UDP-N-acetylglucosamine--N-acetylmuramyl-(pentapeptide) pyrophosphoryl-undecaprenol N-acetylglucosamine transferase (371 aa).

Residues 15-17, N126, R172, S199, I256, 275-280, and Q301 each bind UDP-N-acetyl-alpha-D-glucosamine; these read TGG and ALTVSE.

Belongs to the glycosyltransferase 28 family. MurG subfamily.

It is found in the cell inner membrane. It carries out the reaction di-trans,octa-cis-undecaprenyl diphospho-N-acetyl-alpha-D-muramoyl-L-alanyl-D-glutamyl-meso-2,6-diaminopimeloyl-D-alanyl-D-alanine + UDP-N-acetyl-alpha-D-glucosamine = di-trans,octa-cis-undecaprenyl diphospho-[N-acetyl-alpha-D-glucosaminyl-(1-&gt;4)]-N-acetyl-alpha-D-muramoyl-L-alanyl-D-glutamyl-meso-2,6-diaminopimeloyl-D-alanyl-D-alanine + UDP + H(+). The protein operates within cell wall biogenesis; peptidoglycan biosynthesis. Its function is as follows. Cell wall formation. Catalyzes the transfer of a GlcNAc subunit on undecaprenyl-pyrophosphoryl-MurNAc-pentapeptide (lipid intermediate I) to form undecaprenyl-pyrophosphoryl-MurNAc-(pentapeptide)GlcNAc (lipid intermediate II). In Francisella philomiragia subsp. philomiragia (strain ATCC 25017 / CCUG 19701 / FSC 153 / O#319-036), this protein is UDP-N-acetylglucosamine--N-acetylmuramyl-(pentapeptide) pyrophosphoryl-undecaprenol N-acetylglucosamine transferase.